The primary structure comprises 221 residues: Orotate phosphoribosyltransferase (221 aa).

Lysine 26 lines the 5-phospho-alpha-D-ribose 1-diphosphate pocket. 34-35 (FF) is an orotate binding site. 5-phospho-alpha-D-ribose 1-diphosphate is bound by residues 72 to 73 (YK), arginine 98, lysine 99, lysine 102, histidine 104, and 123 to 131 (DDVISAGTS). Residues serine 127 and arginine 155 each contribute to the orotate site.

The protein belongs to the purine/pyrimidine phosphoribosyltransferase family. PyrE subfamily. Homodimer. Requires Mg(2+) as cofactor.

It carries out the reaction orotidine 5'-phosphate + diphosphate = orotate + 5-phospho-alpha-D-ribose 1-diphosphate. It participates in pyrimidine metabolism; UMP biosynthesis via de novo pathway; UMP from orotate: step 1/2. Catalyzes the transfer of a ribosyl phosphate group from 5-phosphoribose 1-diphosphate to orotate, leading to the formation of orotidine monophosphate (OMP). This Janthinobacterium sp. (strain Marseille) (Minibacterium massiliensis) protein is Orotate phosphoribosyltransferase.